The chain runs to 383 residues: Trichodiene synthase (383 aa).

It belongs to the trichodiene synthase family.

The enzyme catalyses (2E,6E)-farnesyl diphosphate = trichodiene + diphosphate. The protein operates within sesquiterpene biosynthesis; trichothecene biosynthesis. TS is a member of the terpene cyclase group of enzymes. It catalyzes the isomerization and cyclization of farnesyl pyro-phosphate to form trichodiene, the first cyclic intermediate in the biosynthetic pathway for trichothecenes. It serves to branch trichothecene biosynthesis from the isoprenoid pathway. This chain is Trichodiene synthase (TRI5), found in Stachybotrys chartarum (Toxic black mold).